The primary structure comprises 210 residues: NEDD4 family-interacting protein 1-like (210 aa).

The tract at residues 1-31 is disordered; it reads MAEPSGRYQQLPCEEEPEAGPQVAADAPPPY. The Cytoplasmic segment spans residues 1-105; it reads MAEPSGRYQQ…ADQLRIGNDG (105 aa). 2 consecutive short sequence motifs (PPxY motif) follow at residues 30–33 and 53–56; these read PYSS and PPSY. A helical membrane pass occupies residues 106 to 126; sequence IFMLTFFMAFLFNWIGFFLSF. Over 127–132 the chain is Extracellular; sequence CLTTSA. Residues 133–153 traverse the membrane as a helical segment; sequence AGRYGAISGFGLSLIKWILIV. The Cytoplasmic segment spans residues 154–161; it reads RFSTYFPG. The helical transmembrane segment at 162–182 threads the bilayer; sequence YFDGQYWLWWVFLVLGFLLFL. Residues 183–210 lie on the Extracellular side of the membrane; the sequence is RGFINYAKIRKMADSFSTLPRTRVLFIY.

The protein resides in the golgi apparatus membrane. In terms of biological role, may play a role in Golgi structure maintenance. The protein is NEDD4 family-interacting protein 1-like (ndfip1l) of Danio rerio (Zebrafish).